A 248-amino-acid chain; its full sequence is Something about silencing protein 5 (248 aa).

One can recognise a YEATS domain in the interval 1 to 139; the sequence is MDHSIEVTFR…SELSKYFDLP (139 aa). Position 144 is a phosphoserine (S144). The disordered stretch occupies residues 223–248; it reads TKQERTNFGSDAIHKDEPVKAHNKLK.

In terms of assembly, component of the SAS complex, at least composed of SAS2, SAS4 and SAS5. These three proteins constitute the core of the complex, and are sufficient to acetylate histones.

Its subcellular location is the nucleus. Functionally, component of the SAS complex, a multiprotein complex that acetylates 'Lys-16' of histone H4 and 'Lys-14' of histone H3. The SAS complex is however unable to acetylate nucleosomal histones. The complex is involved in transcriptional silencing at telomeres and at HML locus. Also involved in rDNA silencing. In the complex, SAS5 is required for maximal histone acetyltransferase (HAT) activity of the complex, suggesting that it may be required to stabilize the complex or help in substrate recognition. In Saccharomyces cerevisiae (strain ATCC 204508 / S288c) (Baker's yeast), this protein is Something about silencing protein 5 (SAS5).